The following is a 456-amino-acid chain: CCA-adding enzyme (456 aa).

ATP contacts are provided by serine 53 and lysine 56. CTP contacts are provided by serine 53 and lysine 56. Positions 65, 67, and 119 each coordinate Mg(2+). Histidine 142, lysine 161, and tyrosine 170 together coordinate ATP. Residues histidine 142, lysine 161, and tyrosine 170 each coordinate CTP.

This sequence belongs to the tRNA nucleotidyltransferase/poly(A) polymerase family. Archaeal CCA-adding enzyme subfamily. In terms of assembly, homodimer. Mg(2+) serves as cofactor.

The catalysed reaction is a tRNA precursor + 2 CTP + ATP = a tRNA with a 3' CCA end + 3 diphosphate. It carries out the reaction a tRNA with a 3' CCA end + 2 CTP + ATP = a tRNA with a 3' CCACCA end + 3 diphosphate. Functionally, catalyzes the addition and repair of the essential 3'-terminal CCA sequence in tRNAs without using a nucleic acid template. Adds these three nucleotides in the order of C, C, and A to the tRNA nucleotide-73, using CTP and ATP as substrates and producing inorganic pyrophosphate. tRNA 3'-terminal CCA addition is required both for tRNA processing and repair. Also involved in tRNA surveillance by mediating tandem CCA addition to generate a CCACCA at the 3' terminus of unstable tRNAs. While stable tRNAs receive only 3'-terminal CCA, unstable tRNAs are marked with CCACCA and rapidly degraded. The polypeptide is CCA-adding enzyme (Thermococcus kodakarensis (strain ATCC BAA-918 / JCM 12380 / KOD1) (Pyrococcus kodakaraensis (strain KOD1))).